The sequence spans 347 residues: Haptoglobin (347 aa).

The signal sequence occupies residues 1–18 (MRALGAVVTLLLWGQLFA). The Sushi domain occupies 31 to 88 (DSCPKPPEIANGYVEHLVRYRCRQFYKLQTEGDGIYTLNSEKQWVNPAAGDKLPKCEA). 4 disulfides stabilise this stretch: cysteine 52/cysteine 86, cysteine 90/cysteine 207, cysteine 250/cysteine 281, and cysteine 292/cysteine 322. A Peptidase S1 domain is found at 103 to 345 (IIGGSMDAKG…LKDWVQETMA (243 aa)). N-linked (GlcNAc...) asparagine glycans are attached at residues asparagine 148 and asparagine 152. The interval 259–264 (VPEKKG) is interaction with CD163.

This sequence belongs to the peptidase S1 family. Tetramer of two alpha and two beta chains; disulfide-linked. The hemoglobin/haptoglobin complex is composed of a haptoglobin dimer bound to two hemoglobin alpha-beta dimers. Interacts with CD163. Interacts with ERGIC3. Expressed by the liver and secreted in plasma.

Its subcellular location is the secreted. Functionally, as a result of hemolysis, hemoglobin is found to accumulate in the kidney and is secreted in the urine. Haptoglobin captures, and combines with free plasma hemoglobin to allow hepatic recycling of heme iron and to prevent kidney damage. Haptoglobin also acts as an antioxidant, has antibacterial activity and plays a role in modulating many aspects of the acute phase response. Hemoglobin/haptoglobin complexes are rapidly cleared by the macrophage CD163 scavenger receptor expressed on the surface of liver Kupfer cells through an endocytic lysosomal degradation pathway. This Rattus norvegicus (Rat) protein is Haptoglobin (Hp).